A 277-amino-acid polypeptide reads, in one-letter code: UPF0276 protein PP_2398 (277 aa).

It belongs to the UPF0276 family.

In Pseudomonas putida (strain ATCC 47054 / DSM 6125 / CFBP 8728 / NCIMB 11950 / KT2440), this protein is UPF0276 protein PP_2398.